A 598-amino-acid polypeptide reads, in one-letter code: Centrosomal protein of 70 kDa (598 aa).

Residues D16–R38 are compositionally biased toward polar residues. The disordered stretch occupies residues D16 to K43. 2 coiled-coil regions span residues T99–R210 and T255–L317. One copy of the TPR repeat lies at N484–S517.

In terms of assembly, directly interacts with tubulin-gamma; this interaction determines centrosomal localization.

Its subcellular location is the cytoplasm. The protein resides in the cytoskeleton. The protein localises to the microtubule organizing center. It localises to the centrosome. In terms of biological role, plays a role in the organization of both preexisting and nascent microtubules in interphase cells. During mitosis, required for the organization and orientation of the mitotic spindle. In Rattus norvegicus (Rat), this protein is Centrosomal protein of 70 kDa (Cep70).